Consider the following 495-residue polypeptide: Putative FAD-containing monooxygenase MymA (495 aa).

Residues S15, E36, W45, 56 to 57 (DS), and V104 each bind FAD.

The protein belongs to the FAD-binding monooxygenase family. FAD is required as a cofactor.

Its function is as follows. Required for maintaining the appropriate mycolic acid composition and permeability of the envelope on its exposure to acidic pH. The polypeptide is Putative FAD-containing monooxygenase MymA (mymA) (Mycobacterium tuberculosis (strain CDC 1551 / Oshkosh)).